A 1277-amino-acid polypeptide reads, in one-letter code: NPC intracellular cholesterol transporter 1 (1277 aa).

Positions 1 to 22 (MGAHHPALGLLLLLLCPAQVFS) are cleaved as a signal peptide. The Lumenal segment spans residues 23-269 (QSCVWYGECG…WRIWGLDAMY (247 aa)). Intrachain disulfides connect cysteine 25–cysteine 74, cysteine 31–cysteine 42, cysteine 63–cysteine 109, cysteine 75–cysteine 113, cysteine 97–cysteine 238, cysteine 100–cysteine 160, cysteine 177–cysteine 184, cysteine 227–cysteine 243, and cysteine 240–cysteine 247. A cholesterol-binding site is contributed by asparagine 41. Asparagine 70 is a glycosylation site (N-linked (GlcNAc...) asparagine). Glutamine 79 contacts cholesterol. N-linked (GlcNAc...) asparagine glycans are attached at residues asparagine 122 and asparagine 137. Residues 175 to 205 (LLCGRDARACNATNWIEYMFNKDNGQAPFTI) form an important for cholesterol binding and cholesterol transfer from NPC1 to liposomes region. N-linked (GlcNAc...) asparagine glycosylation is found at asparagine 185, asparagine 222, and asparagine 228. Residues 270-290 (VIMWVTYVAFLFVFFGALLAV) traverse the membrane as a helical segment. Over 291-350 (WCHRRRYFVSEYTPIDSNIAFSVNSSDKGEASCCDPLGAAFDDCLRRMFTKWGAFCVRNP) the chain is Cytoplasmic. A helical transmembrane segment spans residues 351–371 (TCIIFFSLAFITVCSSGLVFV). Topologically, residues 372–621 (QVTTNPVELW…ELNRESNSDV (250 aa)) are lumenal. N-linked (GlcNAc...) asparagine glycans are attached at residues asparagine 414, asparagine 459, asparagine 478, and asparagine 524. Disulfide bonds link cysteine 468-cysteine 479 and cysteine 516-cysteine 533. An SSD domain is found at 620–785 (DVFTVIISYV…ITCFVSLLGL (166 aa)). Residues 622–642 (FTVIISYVVMFLYISLALGHI) form a helical membrane-spanning segment. Over 643–653 (QSCSRLLVDSK) the chain is Cytoplasmic. Residues 654-674 (ISLGIAGILIVLSSVACSLGI) form a helical membrane-spanning segment. Residues 675 to 683 (FSYMGMPLT) lie on the Lumenal side of the membrane. A helical transmembrane segment spans residues 684–704 (LIVIEVIPFLVLAVGVDNIFI). The Cytoplasmic segment spans residues 705–730 (LVQTYQRDERLQEETLDQQLGRILGE). Residues 731-751 (VAPTMFLSSFSETSAFFFGAL) form a helical membrane-spanning segment. Residues 752-759 (SSMPAVHT) lie on the Lumenal side of the membrane. The chain crosses the membrane as a helical span at residues 760-780 (FSLFAGMAVLIDFLLQITCFV). The Cytoplasmic portion of the chain corresponds to 781–832 (SLLGLDIKRQEKNHLDILCCVRGADDGQGSHASESYLFRFFKNYFAPLLLKD). Residues 833–853 (WLRPIVVAVFVGVLSFSVAVV) form a helical membrane-spanning segment. Topologically, residues 854–1097 (NKVDIGLDQS…EQYLTIIDDT (244 aa)) are lumenal. N-linked (GlcNAc...) asparagine glycosylation is found at asparagine 868 and asparagine 898. Cysteine 909 and cysteine 914 form a disulfide bridge. Residues asparagine 916, asparagine 961, asparagine 968, and asparagine 1063 are each glycosylated (N-linked (GlcNAc...) asparagine). 3 disulfide bridges follow: cysteine 956-cysteine 1011, cysteine 957-cysteine 979, and cysteine 967-cysteine 976. The helical transmembrane segment at 1098–1118 (IFNLSVSLGSIFLVTLVVLGC) threads the bilayer. Residues 1119–1123 (ELWSA) are Cytoplasmic-facing. The helical transmembrane segment at 1124-1144 (VIMCITIAMILVNMFGVMWLW) threads the bilayer. Glycine 1145 is a topological domain (lumenal). A helical transmembrane segment spans residues 1146-1166 (ISLNAVSLVNLVMSCGISVEF). At 1167-1194 (CSHITRAFTMSTKGSRVSRAEEALAHMG) the chain is on the cytoplasmic side. A helical membrane pass occupies residues 1195-1215 (SSVFSGITLTKFGGIVVLAFA). Topologically, residues 1216-1226 (KSQIFEIFYFR) are lumenal. A helical membrane pass occupies residues 1227–1247 (MYLAMVLLGATHGLIFLPVLL). Residues 1248 to 1277 (SYIGPSVNKAKRHTTYERYRGTERERLLNF) are Cytoplasmic-facing. The interval 1274–1277 (LLNF) is required for location in lysosomes. The short motif at 1274 to 1277 (LLNF) is the Di-leucine motif element.

It belongs to the patched family. As to quaternary structure, interacts (via the second lumenal domain) with NPC2. Interacts with TMEM97; the interaction may decrease NPC1 availability to the cell. Interacts with TIM1. Interacts with SLC38A9; this interaction inhibits cholesterol-mediated mTORC1 activation via its sterol transport activity. Post-translationally, N-glycosylated. Detected in liver (at protein level). Ubiquitous. Detected in adult heart, spleen, lung, liver, skeletal muscle, kidney, testis.

It localises to the late endosome membrane. It is found in the lysosome membrane. It catalyses the reaction cholesterol(in) = cholesterol(out). Functionally, intracellular cholesterol transporter which acts in concert with NPC2 and plays an important role in the egress of cholesterol from the endosomal/lysosomal compartment. Unesterified cholesterol that has been released from LDLs in the lumen of the late endosomes/lysosomes is transferred by NPC2 to the cholesterol-binding pocket in the N-terminal domain of NPC1. Cholesterol binds to NPC1 with the hydroxyl group buried in the binding pocket. May play a role in vesicular trafficking in glia, a process that may be crucial for maintaining the structural and functional integrity of nerve terminals. Inhibits cholesterol-mediated mTORC1 activation throught its interaction with SLC38A9. The sequence is that of NPC intracellular cholesterol transporter 1 from Mus musculus (Mouse).